The sequence spans 416 residues: DNA-guanine transglycosylase (416 aa).

Asp95 (proton acceptor) is an active-site residue. The active-site Nucleophile is Asp256. Residues Cys368, Cys370, Cys373, and His395 each coordinate Zn(2+).

It belongs to the DNA-guanine transglycosylase family. It depends on Zn(2+) as a cofactor.

In terms of biological role, part of the dpd cluster involved in the insertion of 7-deazaguanine derivatives in DNA. DpdA may insert 7-cyano-7-deazaguanine (preQ0) into DNA with the help of DpdB. DpdA and dpdB are necessary and sufficient to synthesize 2'-deoxy-7-cyano-7-deazaguanosine (dPreQ0). The protein is DNA-guanine transglycosylase of Salmonella montevideo.